The sequence spans 412 residues: Interferon-inducible GTPase 5 (412 aa).

Residues 51–234 (TRLEVGVTGE…PMLVTTWEHD (184 aa)) enclose the IRG-type G domain. GTP-binding positions include 60–67 (ESGAGKSS), 85–89 (TGVVE), and 215–217 (SNL). Residues serine 246 and serine 303 each carry the phosphoserine modification.

This sequence belongs to the TRAFAC class dynamin-like GTPase superfamily. IRG family. In terms of assembly, interacts with PLIN2/ADRP and COX4I1/COXIV. Expressed in spermatozoa tails from the testis and epididymis, where it may be a component of the fibrous sheath (at protein level).

It localises to the cell projection. It is found in the cilium. The protein resides in the flagellum. Its subcellular location is the lipid droplet. The enzyme catalyses GTP + H2O = GDP + phosphate + H(+). Its function is as follows. Required for sperm motility and therefore male fertility, via positive regulation of spermatozoa fibrous sheath formation. The protein is Interferon-inducible GTPase 5 of Mus musculus (Mouse).